Consider the following 451-residue polypeptide: BAHD acyltransferase At3g29680 (451 aa).

Catalysis depends on proton acceptor residues histidine 161 and aspartate 393.

Belongs to the plant acyltransferase family.

The sequence is that of BAHD acyltransferase At3g29680 from Arabidopsis thaliana (Mouse-ear cress).